Reading from the N-terminus, the 399-residue chain is Elongation factor Tu (399 aa).

The region spanning 10–207 (KTHMNVGTIG…AVDSYFPDPV (198 aa)) is the tr-type G domain. Positions 19-26 (GHIDHGKT) are G1. 19 to 26 (GHIDHGKT) is a GTP binding site. Mg(2+) is bound at residue Thr26. The segment at 60 to 64 (GITIN) is G2. The segment at 81–84 (DCPG) is G3. Residues 81-85 (DCPGH) and 136-139 (NKVD) contribute to the GTP site. A G4 region spans residues 136–139 (NKVD). Residues 174–176 (SAL) form a G5 region.

The protein belongs to the TRAFAC class translation factor GTPase superfamily. Classic translation factor GTPase family. EF-Tu/EF-1A subfamily. As to quaternary structure, monomer.

The protein localises to the cytoplasm. It catalyses the reaction GTP + H2O = GDP + phosphate + H(+). GTP hydrolase that promotes the GTP-dependent binding of aminoacyl-tRNA to the A-site of ribosomes during protein biosynthesis. The polypeptide is Elongation factor Tu (Petrotoga mobilis (strain DSM 10674 / SJ95)).